A 195-amino-acid polypeptide reads, in one-letter code: Obelin (195 aa).

Residues 1–6 (MASKYA) constitute a propeptide that is removed on maturation. EF-hand domains lie at 17 to 52 (KWIKRHKFMFDYLDINGNGQITLDEIVSKASDDICK), 53 to 88 (NLGATPAQTQRHQDCVEAFFRGCGLEYGKETKFPEF), 110 to 145 (LIREWGDAVFDIFDKDGSGTITLDEWKAYGRISGIS), and 146 to 181 (PSEEDCEKTFQHCDLDNSGELDVDEMTRQHLGFWYT). Residues Asp30, Asn32, Asn34, Gln36, and Glu41 each coordinate Ca(2+). Residues Asp123, Asp125, Ser127, Thr129, Glu134, Asp159, Asp161, Ser163, Glu165, and Glu170 each contribute to the Ca(2+) site.

Belongs to the aequorin family.

Its function is as follows. Ca(2+)-dependent bioluminescence photoprotein. Displays an emission peak at 495 nm (blue light). Trace amounts of calcium ion trigger the intramolecular oxidation of the chromophore, coelenterazine into coelenteramide and CO(2) with the concomitant emission of light. This Obelia geniculata (Knotted thread hydroid) protein is Obelin.